Consider the following 88-residue polypeptide: uncharacterized protein (88 aa).

This is an uncharacterized protein from Banana bunchy top virus (isolate Autralia) (BBTV).